A 2169-amino-acid polypeptide reads, in one-letter code: MIRAFAQPSTPPYQPLSSCLSEDTERKFKGKVVHEAQLNCFYISPGGSNYGSPRPAHANMNANAAAGLAPEHIPTPGAALSWLAAIDAARQAKLMGSAGNATISTVSSTQRKRQQYGKPKKQGGTTATRPPRALLCLTLKNPIRRACISIVEWKPFEIIILLTIFANCVALAIYIPFPEDDSNATNSNLERVEYLFLIIFTVEAFLKVIAYGLLFHPNAYLRNGWNLLDFIIVVVGLFSAILEQATKADGANALGGKGAGFDVKALRAFRVLRPLRLVSGVPSLQVVLNSIIKAMVPLLHIALLVLFVIIIYAIIGLELFMGKMHKTCYNQEGIIDVPAEEDPSPCALETGHGRQCQNGTVCKPGWDGPKHGITNFDNFAFAMLTVFQCITMEGWTDVLYWMQDAMGYELPWVYFVSLVIFGSFFVLNLVLGVLSGEFSKEREKAKARGDFQKLREKQQLEEDLKGYLDWITQAEDIDPENEDEGMDEDKPRNMSMPTSETESVNTENVAGGDIEGENCGARLAHRISKSKFSRYWRRWNRFCRRKCRAAVKSNVFYWLVIFLVFLNTLTIASEHYNQPHWLTEVQDTANKALLALFTAEMLLKMYSLGLQAYFVSLFNRFDCFIVCGGILETILVETKIMSPLGISCWRCVRLLRIFKITRYWNSLSNLVASLLNSLRSIASLLLLLFLFIIIFSLLGMQLFGGKFNFDEMQTRRSTFDNFPQSLLTVFQILTGEDWNSVMYDGIMAYGGPSFPGMLVCIYFIILFISPNYILLNLFLAIAVDNLADAESLTSAQKEEEEEKERKKLARTASPEKKQEVMEKPAVEESKEEKIELKSITADGESPPTTKINMDDLQPSENEDKSPHSNPDTAGEEDEEEPEMPVGPRPRPLSELHLKEKAVPMPEASAFFIFSPNNRFRLQCHRIVNDTIFTNLILFFILLSSISLAAEDPVQHTSFRNHILFYFDIVFTTIFTIEIALKMTAYGAFLHKGSFCRNYFNILDLLVVSVSLISFGIQSSAINVVKILRVLRVLRPLRINRAKGLKHVVQCVFVAIRTIGNIVIVTTLLQFMFACIGVQLFKGKLYTCSDSSKQTEAESKGNYITYKTGEVDHPIIQPRSWENSKFDFDNVLAAMMALFTVSTFEGWPELLYRSIDSHTEDKGPIYNYRVEISIFFIIYIIIIAFFMMNIFVGFVIVTFQEQGEQEYKNCELDKNQRQCVEYALKARPLPRYIPKNQHQYKVWYVVNSTYFEYLMFVLILLNTICLAMQHYGQSCLFKIAMNILNMLFTGLFTVEMILKLIAFKPKHYFCDAWNTFDALIVVGSIVDIAITEVHPAEHTQCSPSMSAEENSRISITFFRLFRVMRLVKLLSRGEGIRTLLWTFIKSFQALPYVALLIVMLFFIYAVIGMQVFGKIALNDTTEINRNNNFQTFPQAVLLLFRCATGEAWQDIMLACMPGKKCAPESEPSNSTEGETPCGSSFAVFYFISFYMLCAFLIINLFVAVIMDNFDYLTRDWSILGPHHLDEFKRIWAEYDPEAKGRIKHLDVVTLLRRIQPPLGFGKLCPHRVACKRLVSMNMPLNSDGTVMFNATLFALVRTALRIKTEGNLEQANEELRAIIKKIWKRTSMKLLDQVVPPAGDDEVTVGKFYATFLIQEYFRKFKKRKEQGLVGKPSQRNALSLQAGLRTLHDIGPEIRRAISGDLTAEEELDKAMKEAVSAASEDDIFRRAGGLFGNHVSYYQSDSRSNFPQTFATQRPLHINKTGNNQADTESPSHEKLVDSTFTPSSYSSTGSNANINNANNTALGRFPHPAGYSSTVSTVEGHGPPLSPAVRVQEAAWKLSSKRCHSRESQGATVSQDMFPDETRSSVRLSEEVEYCSEPSLLSTDILSYQDDENRQLTCLEEDKREIQPCPKRSFLRSASLGRRASFHLECLKRQKDQGGDISQKTALPLHLVHHQALAVAGLSPLLQRSHSPSTFPRPRPTPPVTPGSRGRPLQPIPTLRLEGAESSEKLNSSFPSIHCSSWSEETTACSGGSSMARRARPVSLTVPSQAGAPGRQFHGSASSLVEAVLISEGLGQFAQDPKFIEVTTQELADACDMTIEEMENAADNILSGGAQQSPNGTLLPFVNCRDPGQDRAVVPEDESCVYALGRGRSEEALPDSRSYVSNL.

Over 1–154 (MIRAFAQPST…RACISIVEWK (154 aa)) the chain is Cytoplasmic. The interval 77-98 (GAALSWLAAIDAARQAKLMGSA) is calmodulin-binding. A disordered region spans residues 104–128 (STVSSTQRKRQQYGKPKKQGGTTAT). Positions 110-121 (QRKRQQYGKPKK) are enriched in basic residues. The I repeat unit spans residues 141–438 (NPIRRACISI…LVLGVLSGEF (298 aa)). Residues 155–173 (PFEIIILLTIFANCVALAI) traverse the membrane as a helical segment. Topologically, residues 174 to 188 (YIPFPEDDSNATNSN) are extracellular. N-linked (GlcNAc...) asparagine glycosylation is present at asparagine 183. A helical transmembrane segment spans residues 189–209 (LERVEYLFLIIFTVEAFLKVI). The Cytoplasmic segment spans residues 210–218 (AYGLLFHPN). The chain crosses the membrane as a helical span at residues 219-239 (AYLRNGWNLLDFIIVVVGLFS). At 240–262 (AILEQATKADGANALGGKGAGFD) the chain is on the extracellular side. Residues 263–281 (VKALRAFRVLRPLRLVSGV) form a helical membrane-spanning segment. The Cytoplasmic portion of the chain corresponds to 282–298 (PSLQVVLNSIIKAMVPL). A helical membrane pass occupies residues 299–320 (LHIALLVLFVIIIYAIIGLELF). Topologically, residues 321-380 (MGKMHKTCYNQEGIIDVPAEEDPSPCALETGHGRQCQNGTVCKPGWDGPKHGITNFDNFA) are extracellular. Cystine bridges form between cysteine 328–cysteine 356 and cysteine 346–cysteine 362. Asparagine 358 carries an N-linked (GlcNAc...) asparagine glycan. Positions 381 to 402 (FAMLTVFQCITMEGWTDVLYWM) form an intramembrane region, pore-forming. Residues 391–394 (TMEG) carry the Selectivity filter of repeat I motif. Glutamate 393 provides a ligand contact to Ca(2+). Over 403–410 (QDAMGYEL) the chain is Extracellular. A helical membrane pass occupies residues 411–431 (PWVYFVSLVIFGSFFVLNLVL). Residues 432–554 (GVLSGEFSKE…RKCRAAVKSN (123 aa)) are Cytoplasmic-facing. Positions 458–475 (QQLEEDLKGYLDWITQAE) are AID/alpha-interaction domain; mediates interaction with the beta subunit. Residues 479–511 (PENEDEGMDEDKPRNMSMPTSETESVNTENVAG) form a disordered region. Residues 495–508 (SMPTSETESVNTEN) are compositionally biased toward polar residues. Serine 499 is modified (phosphoserine). Position 506 is a phosphothreonine (threonine 506). The II repeat unit spans residues 540 to 786 (NRFCRRKCRA…LFLAIAVDNL (247 aa)). Residues 555-573 (VFYWLVIFLVFLNTLTIAS) form a helical membrane-spanning segment. Residues 574–584 (EHYNQPHWLTE) lie on the Extracellular side of the membrane. A helical membrane pass occupies residues 585 to 605 (VQDTANKALLALFTAEMLLKM). Over 606–616 (YSLGLQAYFVS) the chain is Cytoplasmic. The helical transmembrane segment at 617-636 (LFNRFDCFIVCGGILETILV) threads the bilayer. Topologically, residues 637-645 (ETKIMSPLG) are extracellular. A helical membrane pass occupies residues 646-664 (ISCWRCVRLLRIFKITRYW). The Cytoplasmic portion of the chain corresponds to 665–683 (NSLSNLVASLLNSLRSIAS). A helical transmembrane segment spans residues 684–703 (LLLLLFLFIIIFSLLGMQLF). The Extracellular portion of the chain corresponds to 704-723 (GGKFNFDEMQTRRSTFDNFP). The segment at residues 724 to 745 (QSLLTVFQILTGEDWNSVMYDG) is an intramembrane region (pore-forming). Positions 734 to 737 (TGED) match the Selectivity filter of repeat II motif. A Ca(2+)-binding site is contributed by glutamate 736. Over 746–755 (IMAYGGPSFP) the chain is Extracellular. Residues 756-775 (GMLVCIYFIILFISPNYILL) form a helical membrane-spanning segment. Over 776 to 930 (NLFLAIAVDN…LQCHRIVNDT (155 aa)) the chain is Cytoplasmic. The interval 794-891 (SAQKEEEEEK…EMPVGPRPRP (98 aa)) is disordered. Residues 813–836 (SPEKKQEVMEKPAVEESKEEKIEL) are compositionally biased toward basic and acidic residues. A phosphoserine mark is found at serine 838 and serine 845. The interval 859–906 (SENEDKSPHSNPDTAGEEDEEEPEMPVGPRPRPLSELHLKEKAVPMPE) is interaction with STAC2. Acidic residues predominate over residues 873–882 (AGEEDEEEPE). One copy of the III repeat lies at 917–1198 (NRFRLQCHRI…IFVGFVIVTF (282 aa)). The helical transmembrane segment at 931–949 (IFTNLILFFILLSSISLAA) threads the bilayer. The Extracellular segment spans residues 950–961 (EDPVQHTSFRNH). Residues 962–981 (ILFYFDIVFTTIFTIEIALK) traverse the membrane as a helical segment. Topologically, residues 982–997 (MTAYGAFLHKGSFCRN) are cytoplasmic. A helical membrane pass occupies residues 998–1016 (YFNILDLLVVSVSLISFGI). Topologically, residues 1017-1023 (QSSAINV) are extracellular. The chain crosses the membrane as a helical span at residues 1024–1041 (VKILRVLRVLRPLRINRA). Residues 1042-1060 (KGLKHVVQCVFVAIRTIGN) are Cytoplasmic-facing. The helical transmembrane segment at 1061-1080 (IVIVTTLLQFMFACIGVQLF) threads the bilayer. The Extracellular portion of the chain corresponds to 1081-1130 (KGKLYTCSDSSKQTEAESKGNYITYKTGEVDHPIIQPRSWENSKFDFDNV). The segment at 1118-1207 (RSWENSKFDF…FQEQGEQEYK (90 aa)) is dihydropyridine binding. Residues 1131–1151 (LAAMMALFTVSTFEGWPELLY) constitute an intramembrane region (pore-forming). The short motif at 1142-1145 (TFEG) is the Selectivity filter of repeat III element. Glutamate 1144 provides a ligand contact to Ca(2+). The Extracellular segment spans residues 1152–1168 (RSIDSHTEDKGPIYNYR). A helical transmembrane segment spans residues 1169 to 1190 (VEISIFFIIYIIIIAFFMMNIF). Topologically, residues 1191 to 1248 (VGFVIVTFQEQGEQEYKNCELDKNQRQCVEYALKARPLPRYIPKNQHQYKVWYVVNST) are cytoplasmic. The stretch at 1235–1508 (NQHQYKVWYV…LFVAVIMDNF (274 aa)) is one IV repeat. Residues 1249-1270 (YFEYLMFVLILLNTICLAMQHY) form a helical membrane-spanning segment. The Extracellular portion of the chain corresponds to 1271–1278 (GQSCLFKI). Residues 1279 to 1300 (AMNILNMLFTGLFTVEMILKLI) form a helical membrane-spanning segment. Over 1301-1310 (AFKPKHYFCD) the chain is Cytoplasmic. A helical membrane pass occupies residues 1311–1330 (AWNTFDALIVVGSIVDIAIT). The Extracellular portion of the chain corresponds to 1331-1353 (EVHPAEHTQCSPSMSAEENSRIS). Residues 1354–1372 (ITFFRLFRVMRLVKLLSRG) form a helical membrane-spanning segment. Residues 1373 to 1390 (EGIRTLLWTFIKSFQALP) lie on the Cytoplasmic side of the membrane. The chain crosses the membrane as a helical span at residues 1391–1411 (YVALLIVMLFFIYAVIGMQVF). Topologically, residues 1412-1433 (GKIALNDTTEINRNNNFQTFPQ) are extracellular. Asparagine 1417 is a glycosylation site (N-linked (GlcNAc...) asparagine). Residues 1434–1452 (AVLLLFRCATGEAWQDIML) constitute an intramembrane region (pore-forming). The Selectivity filter of repeat IV motif lies at 1443 to 1446 (TGEA). Residues 1453 to 1480 (ACMPGKKCAPESEPSNSTEGETPCGSSF) are Extracellular-facing. The interval 1459 to 1527 (KCAPESEPSN…LGPHHLDEFK (69 aa)) is dihydropyridine binding. Cysteines 1460 and 1476 form a disulfide. N-linked (GlcNAc...) asparagine glycosylation occurs at asparagine 1468. The segment at 1473 to 1515 (ETPCGSSFAVFYFISFYMLCAFLIINLFVAVIMDNFDYLTRDW) is phenylalkylamine binding. Residues 1481–1505 (AVFYFISFYMLCAFLIINLFVAVIM) form a helical membrane-spanning segment. At 1506–2169 (DNFDYLTRDW…PDSRSYVSNL (664 aa)) the chain is on the cytoplasmic side. Residues 1640–1667 (DEVTVGKFYATFLIQEYFRKFKKRKEQG) form an important for interaction with STAC1, STAC2 and STAC3 region. Residues 1640–1673 (DEVTVGKFYATFLIQEYFRKFKKRKEQGLVGKPS) form a calmodulin-binding region. The interval 1646 to 1666 (KFYATFLIQEYFRKFKKRKEQ) is calmodulin-binding IQ region. Residues 1680–1699 (LQAGLRTLHDIGPEIRRAIS) form an important for localization in at the junctional membrane region. Phosphoserine is present on residues serine 1699 and serine 1720. 2 stretches are compositionally biased toward polar residues: residues 1761 to 1770 (KTGNNQADTE) and 1780 to 1792 (STFT…STGS). The interval 1761–1793 (KTGNNQADTESPSHEKLVDSTFTPSSYSSTGSN) is disordered. At serine 1927 the chain carries Phosphoserine; by PKA. The segment at 1970–1998 (RSHSPSTFPRPRPTPPVTPGSRGRPLQPI) is disordered. Residues 1977-1987 (FPRPRPTPPVT) show a composition bias toward pro residues.

Belongs to the calcium channel alpha-1 subunit (TC 1.A.1.11) family. CACNA1C subfamily. In terms of assembly, component of a calcium channel complex consisting of a pore-forming alpha subunit (CACNA1C) and ancillary beta, gamma and delta subunits. The channel complex contains alpha, beta, gamma and delta subunits in a 1:1:1:1 ratio, i.e. it contains only one of each type of subunit. CACNA1C channel activity is modulated by ancillary subunits, such as CACNB1, CACNB2, CACNB3, CACNA2D1 and CACNA2D4. Interacts with the gamma subunits CACNG4, CACNG6, CACNG7 and CACNG8. Interacts with CACNB1. Interacts with CACNB2. Identified in a complex with CACNA2D4 and CACNB3. Interacts with CACNB3. Interacts with CACNA2D1. Interacts with CACNA2D4. Interacts with CALM1. Interacts (via the N-terminus and the C-terminal C and IQ motifs) with CABP1; this inhibits Ca(2+)-dependent channel inactivation. The binding via the C motif is calcium independent whereas the binding via IQ requires the presence of calcium and is mutually exclusive with calmodulin binding. The binding to the cytoplasmic N-terminal domain is calcium independent but is essential for the channel modulation. Interacts (via C-terminal CDB motif) with CABP5; in a calcium-dependent manner. Interacts with CIB1; the interaction increases upon cardiomyocytes hypertrophy. Interacts with STAC2 and STAC3; this inhibits channel inactivation. Post-translationally, phosphorylation by PKA at Ser-1927 activates the channel. Elevated levels of blood glucose lead to increased phosphorylation by PKA. Is also phosphorylated in vitro by CaM-kinase II, PKC and CGPK. As to expression, detected in hippocampus and brain cortex, on neuronal cell bodies and dendrites, and in post-synaptic density in brain (at protein level). Isoforms 4 and 5 are expressed throughout the central nervous system, with highest levels in the olfactory bulb and cerebellum. Also expressed in heart, pituitary, adrenal gland, liver, kidney, and in a much lesser extent in testes and spleen.

The protein resides in the cell membrane. It is found in the sarcolemma. It localises to the perikaryon. Its subcellular location is the postsynaptic density membrane. The protein localises to the cell projection. The protein resides in the dendrite. It is found in the T-tubule. It catalyses the reaction Ca(2+)(in) = Ca(2+)(out). Inhibited by dihydropyridines (DHP), such as isradipine. Inhibited by nifedipine. Channel activity is regulated by Ca(2+) and calmodulin. Binding of STAC1, STAC2 or STAC3 to a region that overlaps with the calmodulin binding site inhibits channel inactivation by Ca(2+) and calmodulin. Binding of calmodulin or CABP1 at the same regulatory sites results in opposite effects on the channel function. Shear stress and pressure increases calcium channel activity. Pore-forming, alpha-1C subunit of the voltage-gated calcium channel that gives rise to L-type calcium currents. Mediates influx of calcium ions into the cytoplasm, and thereby triggers calcium release from the sarcoplasm. Plays an important role in excitation-contraction coupling in the heart. Required for normal heart development and normal regulation of heart rhythm. Required for normal contraction of smooth muscle cells in blood vessels and in the intestine. Essential for normal blood pressure regulation via its role in the contraction of arterial smooth muscle cells. Long-lasting (L-type) calcium channels belong to the 'high-voltage activated' (HVA) group. In Rattus norvegicus (Rat), this protein is Voltage-dependent L-type calcium channel subunit alpha-1C (Cacna1c).